The chain runs to 529 residues: Inosine-5'-monophosphate dehydrogenase (529 aa).

CBS domains are found at residues 129–185 (MVTD…SKQV) and 189–246 (MTKA…PLAT). Residues aspartate 283 and 334 to 336 (GVG) each bind NAD(+). Glycine 336 and glycine 338 together coordinate K(+). IMP is bound at residue serine 339. Cysteine 341 contributes to the K(+) binding site. Residue cysteine 341 is the Thioimidate intermediate of the active site. Residues 374 to 376 (DGG), 397 to 398 (GS), and 421 to 425 (YRGMG) each bind IMP. The Proton acceptor role is filled by arginine 443. Glutamate 458 provides a ligand contact to IMP. K(+) contacts are provided by glutamate 511, serine 512, and histidine 513.

It belongs to the IMPDH/GMPR family. Homotetramer. K(+) is required as a cofactor.

It catalyses the reaction IMP + NAD(+) + H2O = XMP + NADH + H(+). It participates in purine metabolism; XMP biosynthesis via de novo pathway; XMP from IMP: step 1/1. Mycophenolic acid (MPA) is a non-competitive inhibitor that prevents formation of the closed enzyme conformation by binding to the same site as the amobile flap. In contrast, mizoribine monophosphate (MZP) is a competitive inhibitor that induces the closed conformation. MPA is a potent inhibitor of mammalian IMPDHs but a poor inhibitor of the bacterial enzymes. MZP is a more potent inhibitor of bacterial IMPDH. Functionally, catalyzes the conversion of inosine 5'-phosphate (IMP) to xanthosine 5'-phosphate (XMP), the first committed and rate-limiting step in the de novo synthesis of guanine nucleotides, and therefore plays an important role in the regulation of cell growth. The protein is Inosine-5'-monophosphate dehydrogenase of Mycobacterium bovis (strain ATCC BAA-935 / AF2122/97).